The following is a 207-amino-acid chain: ATP synthase subunit b 2 (207 aa).

The chain crosses the membrane as a helical span at residues 53-72; it reads TYASQLLWLVITFGVFYLLM.

This sequence belongs to the ATPase B chain family. F-type ATPases have 2 components, F(1) - the catalytic core - and F(0) - the membrane proton channel. F(1) has five subunits: alpha(3), beta(3), gamma(1), delta(1), epsilon(1). F(0) has three main subunits: a(1), b(2) and c(10-14). The alpha and beta chains form an alternating ring which encloses part of the gamma chain. F(1) is attached to F(0) by a central stalk formed by the gamma and epsilon chains, while a peripheral stalk is formed by the delta and b chains.

Its subcellular location is the cell inner membrane. Functionally, f(1)F(0) ATP synthase produces ATP from ADP in the presence of a proton or sodium gradient. F-type ATPases consist of two structural domains, F(1) containing the extramembraneous catalytic core and F(0) containing the membrane proton channel, linked together by a central stalk and a peripheral stalk. During catalysis, ATP synthesis in the catalytic domain of F(1) is coupled via a rotary mechanism of the central stalk subunits to proton translocation. Its function is as follows. Component of the F(0) channel, it forms part of the peripheral stalk, linking F(1) to F(0). The b'-subunit is a diverged and duplicated form of b found in plants and photosynthetic bacteria. In Rhizobium etli (strain ATCC 51251 / DSM 11541 / JCM 21823 / NBRC 15573 / CFN 42), this protein is ATP synthase subunit b 2 (atpF2).